We begin with the raw amino-acid sequence, 124 residues long: MPTIQQLIRFERKQIVGTSKSAALESCPQKKGVCTKVYTTTPKKPNSALRKVARVRLTSGFEITAYIPGIGHNLQEHSVVLIRGGRVKDLPGVRYHIIRGALDSTGVKNRLRARSKYGASKPKK.

Belongs to the universal ribosomal protein uS12 family. In terms of assembly, part of the 30S ribosomal subunit.

The protein localises to the plastid. The protein resides in the chloroplast. With S4 and S5 plays an important role in translational accuracy. Located at the interface of the 30S and 50S subunits. In Cyanidium caldarium (Red alga), this protein is Small ribosomal subunit protein uS12c (rps12).